A 32-amino-acid chain; its full sequence is Periplasmic [NiFeSe] hydrogenase small subunit (32 aa).

Cys18 and Cys21 together coordinate [4Fe-4S] cluster.

The protein belongs to the [NiFe]/[NiFeSe] hydrogenase small subunit family. Heterodimer of a large and a small subunit. [3Fe-4S] cluster is required as a cofactor. [4Fe-4S] cluster serves as cofactor.

The protein localises to the periplasm. It carries out the reaction H2 + A = AH2. The protein is Periplasmic [NiFeSe] hydrogenase small subunit of Desulfomicrobium norvegicum (strain DSM 1741 / NCIMB 8310) (Desulfovibrio baculatus (strain Norway 4)).